The chain runs to 118 residues: Non-specific lipid-transfer protein 2A (118 aa).

A signal peptide spans M1–A26. 4 disulfide bridges follow: C30/C77, C40/C54, C55/C100, and C75/C114.

Belongs to the plant LTP family.

Plant non-specific lipid-transfer proteins transfer phospholipids as well as galactolipids across membranes. May play a role in wax or cutin deposition in the cell walls of expanding epidermal cells and certain secretory tissues. In Oryza sativa subsp. japonica (Rice), this protein is Non-specific lipid-transfer protein 2A (LTP2-A).